The primary structure comprises 332 residues: Ketol-acid reductoisomerase (NADP(+)) (332 aa).

The KARI N-terminal Rossmann domain occupies 5 to 185; the sequence is VKVYYDDEVS…GCTRAGVIET (181 aa). Residues 28-31, Arg-51, Ser-56, and 86-89 each bind NADP(+); these read YGNQ and DLVQ. The active site involves His-111. Gly-137 contacts NADP(+). In terms of domain architecture, KARI C-terminal knotted spans 186 to 331; the sequence is TFKDETESDL…RFIRKMSGLE (146 aa). Asp-194, Glu-198, Glu-230, and Glu-234 together coordinate Mg(2+). Ser-255 lines the substrate pocket.

The protein belongs to the ketol-acid reductoisomerase family. Mg(2+) is required as a cofactor.

The enzyme catalyses (2R)-2,3-dihydroxy-3-methylbutanoate + NADP(+) = (2S)-2-acetolactate + NADPH + H(+). It carries out the reaction (2R,3R)-2,3-dihydroxy-3-methylpentanoate + NADP(+) = (S)-2-ethyl-2-hydroxy-3-oxobutanoate + NADPH + H(+). The protein operates within amino-acid biosynthesis; L-isoleucine biosynthesis; L-isoleucine from 2-oxobutanoate: step 2/4. Its pathway is amino-acid biosynthesis; L-valine biosynthesis; L-valine from pyruvate: step 2/4. In terms of biological role, involved in the biosynthesis of branched-chain amino acids (BCAA). Catalyzes an alkyl-migration followed by a ketol-acid reduction of (S)-2-acetolactate (S2AL) to yield (R)-2,3-dihydroxy-isovalerate. In the isomerase reaction, S2AL is rearranged via a Mg-dependent methyl migration to produce 3-hydroxy-3-methyl-2-ketobutyrate (HMKB). In the reductase reaction, this 2-ketoacid undergoes a metal-dependent reduction by NADPH to yield (R)-2,3-dihydroxy-isovalerate. The sequence is that of Ketol-acid reductoisomerase (NADP(+)) from Pyrococcus abyssi (strain GE5 / Orsay).